A 363-amino-acid chain; its full sequence is Mitochondrial phosphate carrier protein 2, mitochondrial (363 aa).

A helical membrane pass occupies residues 65–85 (AYFAACTVAGMLSCGITHTAI). 3 Solcar repeats span residues 65 to 149 (AYFA…AKKY), 162 to 246 (YKTL…TVEL), and 263 to 342 (VQLG…VKVL). Topologically, residues 86 to 123 (TPLDVIKCNMQIDPLKYKNITSAFKTTIKEQGLKGFTR) are mitochondrial matrix. Residues 124-143 (GWSPTLLGYSAQGAFKYGLY) form a helical membrane-spanning segment. Residues 144–164 (EYAKKYYSDIVGPEYAAKYKT) lie on the Mitochondrial intermembrane side of the membrane. A helical membrane pass occupies residues 165–185 (LIYLAGSASAEIVADVALCPM). Over 186–220 (EAVKVRVQTQPGFARGLSDGLPKIIKSEGFRGLHK) the chain is Mitochondrial matrix. Residues 221 to 240 (GLVPLWGRQIPYTMMKFATF) form a helical membrane-spanning segment. The Mitochondrial intermembrane portion of the chain corresponds to 241 to 261 (ENTVELIYKKVMPTPKEECSK). Residues 262-282 (PVQLGVSFAGGYIAGIFCAII) form a helical membrane-spanning segment. Residues 283–321 (SHPADNLVSFLNNSKGATVADAVKRLGLWGMLTRGLPLR) are Mitochondrial matrix-facing. A helical transmembrane segment spans residues 322–342 (IFMIGTLTGAQWVIYDAVKVL). At 343-363 (AGLPTTGGASPATALAPSVSA) the chain is on the mitochondrial intermembrane side.

It belongs to the mitochondrial carrier (TC 2.A.29) family. As to expression, expressed in leaves. Strong expression in senescent leaves.

Its subcellular location is the mitochondrion inner membrane. Functionally, transport of phosphate groups from the cytosol to the mitochondrial matrix. Mediates salt stress tolerance through an ATP-dependent pathway and via modulation of the gibberellin metabolism. This chain is Mitochondrial phosphate carrier protein 2, mitochondrial (MPT2), found in Arabidopsis thaliana (Mouse-ear cress).